The primary structure comprises 116 residues: Peptidyl-tRNA hydrolase (116 aa).

Belongs to the PTH2 family.

The protein localises to the cytoplasm. It carries out the reaction an N-acyl-L-alpha-aminoacyl-tRNA + H2O = an N-acyl-L-amino acid + a tRNA + H(+). The natural substrate for this enzyme may be peptidyl-tRNAs which drop off the ribosome during protein synthesis. The chain is Peptidyl-tRNA hydrolase from Methanopyrus kandleri (strain AV19 / DSM 6324 / JCM 9639 / NBRC 100938).